The sequence spans 142 residues: Large ribosomal subunit protein uL13 (142 aa).

This sequence belongs to the universal ribosomal protein uL13 family. In terms of assembly, part of the 50S ribosomal subunit.

This protein is one of the early assembly proteins of the 50S ribosomal subunit, although it is not seen to bind rRNA by itself. It is important during the early stages of 50S assembly. The chain is Large ribosomal subunit protein uL13 from Pseudomonas paraeruginosa (strain DSM 24068 / PA7) (Pseudomonas aeruginosa (strain PA7)).